The chain runs to 860 residues: Spindle and centriole-associated protein 1 (860 aa).

4 disordered regions span residues arginine 127–glutamine 150, aspartate 172–arginine 201, alanine 230–glutamine 250, and proline 294–serine 332. Polar residues-rich tracts occupy residues proline 139 to glutamine 150, glutamate 190 to asparagine 200, and alanine 230 to leucine 245. Phosphothreonine is present on threonine 236. A Phosphoserine modification is found at serine 240. A compositionally biased stretch (low complexity) spans serine 317–threonine 329. Residues arginine 383–valine 439 are a coiled coil. The segment at proline 623–proline 645 is disordered. Positions serine 627–proline 642 are enriched in low complexity. At serine 648 the chain carries Phosphoserine. The tract at residues isoleucine 693–threonine 718 is disordered. A coiled-coil region spans residues serine 729 to lysine 757. Phosphoserine occurs at positions 765, 766, 769, and 824. Residues glycine 792–proline 860 are disordered. Residues valine 804 to serine 824 are compositionally biased toward low complexity.

Interacts with CEP120.

Its subcellular location is the cytoplasm. The protein resides in the cytoskeleton. The protein localises to the microtubule organizing center. It localises to the centrosome. It is found in the centriole. Its subcellular location is the spindle. Its function is as follows. Regulator required for centriole duplication, for proper bipolar spindle formation and chromosome congression in mitosis. The chain is Spindle and centriole-associated protein 1 (Spice1) from Mus musculus (Mouse).